We begin with the raw amino-acid sequence, 510 residues long: Ninja-family protein mc410 (510 aa).

Disordered stretches follow at residues Met1–Leu179, His323–Phe414, and Arg481–Ser510. 2 stretches are compositionally biased toward basic and acidic residues: residues Ser31–Asn44 and Arg103–Arg146. Residues Ser148 to Ala160 are compositionally biased toward polar residues. Composition is skewed to basic and acidic residues over residues Arg363 to Val389 and Arg397 to Arg406. Polar residues predominate over residues Val485–Val496. The segment covering Ser497–Ser510 has biased composition (low complexity).

The protein belongs to the Ninja family.

The protein resides in the nucleus. This chain is Ninja-family protein mc410 (MC410), found in Nicotiana tabacum (Common tobacco).